The following is a 337-amino-acid chain: D-alanine--D-alanine ligase (337 aa).

The ATP-grasp domain occupies 124 to 330 (KMWFSALGIP…FTEYLSLVIN (207 aa)). 154 to 209 (ALAQWGSIFVKAASQGSSVGCYKVDDSAKVAGVLKDAFGYAPYVIVEKTIKARELE) is a binding site for ATP. Mg(2+) is bound by residues D284, E297, and N299.

It belongs to the D-alanine--D-alanine ligase family. The cofactor is Mg(2+). Mn(2+) is required as a cofactor.

Its subcellular location is the cytoplasm. The catalysed reaction is 2 D-alanine + ATP = D-alanyl-D-alanine + ADP + phosphate + H(+). Its pathway is cell wall biogenesis; peptidoglycan biosynthesis. Its function is as follows. Cell wall formation. This chain is D-alanine--D-alanine ligase, found in Shewanella baltica (strain OS185).